The following is a 293-amino-acid chain: uncharacterized protein (293 aa).

Disordered regions lie at residues 1 to 114 and 268 to 293; these read MFLR…IPKL and EETA…GRML. 3 positions are modified to phosphoserine: serine 34, serine 35, and serine 89. 2 stretches are compositionally biased toward basic and acidic residues: residues 73 to 95 and 277 to 293; these read SSRD…RDKT and GQER…GRML.

This is an uncharacterized protein from Mus musculus (Mouse).